Consider the following 253-residue polypeptide: tRNA (guanine-N(1)-)-methyltransferase (253 aa).

Residues Gly113 and 133-138 (IGDYVL) contribute to the S-adenosyl-L-methionine site.

It belongs to the RNA methyltransferase TrmD family. Homodimer.

The protein localises to the cytoplasm. The enzyme catalyses guanosine(37) in tRNA + S-adenosyl-L-methionine = N(1)-methylguanosine(37) in tRNA + S-adenosyl-L-homocysteine + H(+). Its function is as follows. Specifically methylates guanosine-37 in various tRNAs. This chain is tRNA (guanine-N(1)-)-methyltransferase, found in Chloroflexus aurantiacus (strain ATCC 29366 / DSM 635 / J-10-fl).